The primary structure comprises 245 residues: 6-carboxyhexanoate--CoA ligase (245 aa).

Belongs to the BioW family. In terms of assembly, homodimer. It depends on Mg(2+) as a cofactor.

It catalyses the reaction heptanedioate + ATP + CoA = 6-carboxyhexanoyl-CoA + AMP + diphosphate. It participates in metabolic intermediate metabolism; pimeloyl-CoA biosynthesis; pimeloyl-CoA from pimelate: step 1/1. Catalyzes the transformation of pimelate into pimeloyl-CoA with concomitant hydrolysis of ATP to AMP. This chain is 6-carboxyhexanoate--CoA ligase, found in Methanococcus vannielii (strain ATCC 35089 / DSM 1224 / JCM 13029 / OCM 148 / SB).